The sequence spans 352 residues: Tropomodulin-3 (352 aa).

S25 carries the phosphoserine modification.

It belongs to the tropomodulin family. In terms of assembly, binds to the N-terminus of tropomyosin and to actin. Interacts with FLII. Ubiquitous.

The protein localises to the cytoplasm. It localises to the cytoskeleton. Functionally, blocks the elongation and depolymerization of the actin filaments at the pointed end. The Tmod/TM complex contributes to the formation of the short actin protofilament, which in turn defines the geometry of the membrane skeleton. In Mus musculus (Mouse), this protein is Tropomodulin-3 (Tmod3).